The chain runs to 397 residues: Lysophospholipid transporter LplT (397 aa).

Topologically, residues 1 to 17 (MSESVHTNTSLWSKGMK) are periplasmic. The chain crosses the membrane as a helical span at residues 18 to 38 (AVIVAQFLSAFGDNALLFATL). Residues 39 to 52 (ALLKAQFYPEWSQP) are Cytoplasmic-facing. The helical transmembrane segment at 53 to 73 (ILQMVFVGAYILFAPFVGQVA) threads the bilayer. The Periplasmic segment spans residues 74 to 90 (DSFAKGRVMMFANGLKL). A helical membrane pass occupies residues 91–111 (LGAASICFGINPFLGYTLVGV). At 112–144 (GAAAYSPAKYGILGELTTGSKLVKANGLMEAST) the chain is on the cytoplasmic side. Residues 145-165 (IAAILLGSVAGGVLADWHVLV) traverse the membrane as a helical segment. Residue Ala166 is a topological domain, periplasmic. The chain crosses the membrane as a helical span at residues 167-187 (LAACALAYGGAVVANIYIPKL). Topologically, residues 188–226 (AAARPGQSWNLINMTRSFLNACTSLWRNGETRFSLVGTS) are cytoplasmic. The chain crosses the membrane as a helical span at residues 227–247 (LFWGAGVTLRFLLVLWVPVAL). Over 248-256 (GITDNSTPT) the chain is Periplasmic. Residues 257–277 (YLNAMVAIGIVVGAGAAAKLV) form a helical membrane-spanning segment. The Cytoplasmic portion of the chain corresponds to 278–280 (TLE). A helical transmembrane segment spans residues 281–301 (TVSRCMPAGILIGVVVLIFSL). At 302-304 (QHE) the chain is on the periplasmic side. A helical transmembrane segment spans residues 305 to 325 (LLPAYALLMLIGVMGGFFVVP). The Cytoplasmic segment spans residues 326-343 (LNALLQERGKKSVGAGNA). Residues 344 to 364 (IAVQNLGENSAMLLMLGIYSL) traverse the membrane as a helical segment. At 365 to 366 (AV) the chain is on the periplasmic side. Residues 367–387 (MVGIPVVPIGIGFGALFALAI) form a helical membrane-spanning segment. Residues 388–397 (TALWIWQRRH) are Cytoplasmic-facing.

It belongs to the major facilitator superfamily. LplT (TC 2.A.1.42) family.

The protein resides in the cell inner membrane. Catalyzes the facilitated diffusion of 2-acyl-glycero-3-phosphoethanolamine (2-acyl-GPE) into the cell. The chain is Lysophospholipid transporter LplT from Shigella boydii serotype 4 (strain Sb227).